The sequence spans 238 residues: Probable rhamnogalacturonate lyase B (238 aa).

The signal sequence occupies residues 1-19; that stretch reads MRLRTSLGVASACASVASA. 3 N-linked (GlcNAc...) asparagine glycosylation sites follow: asparagine 27, asparagine 110, and asparagine 143.

This sequence belongs to the polysaccharide lyase 4 family.

It is found in the secreted. The enzyme catalyses Endotype eliminative cleavage of L-alpha-rhamnopyranosyl-(1-&gt;4)-alpha-D-galactopyranosyluronic acid bonds of rhamnogalacturonan I domains in ramified hairy regions of pectin leaving L-rhamnopyranose at the reducing end and 4-deoxy-4,5-unsaturated D-galactopyranosyluronic acid at the non-reducing end.. Its function is as follows. Pectinolytic enzymes consist of four classes of enzymes: pectin lyase, polygalacturonase, pectin methylesterase and rhamnogalacturonase. Degrades the rhamnogalacturonan I (RG-I) backbone of pectin. The polypeptide is Probable rhamnogalacturonate lyase B (rglB) (Aspergillus oryzae (strain ATCC 42149 / RIB 40) (Yellow koji mold)).